The following is a 20-amino-acid chain: D-alpha-glycerophosphatase (20 aa).

In terms of assembly, monomer. It depends on Mg(2+) as a cofactor. Requires Mn(2+) as cofactor.

The protein resides in the cytoplasm. It functions in the pathway polyol metabolism; glycerol biosynthesis. The protein is D-alpha-glycerophosphatase of Bacillus licheniformis.